The sequence spans 242 residues: Ribonuclease HII (242 aa).

The region spanning 21–234 is the RNase H type-2 domain; that stretch reads KIIVGLDEAG…SKNLLKEIEE (214 aa). A divalent metal cation is bound by residues aspartate 27, glutamate 28, and aspartate 128.

It belongs to the RNase HII family. The cofactor is Mn(2+). Mg(2+) serves as cofactor.

The protein resides in the cytoplasm. It carries out the reaction Endonucleolytic cleavage to 5'-phosphomonoester.. Endonuclease that specifically degrades the RNA of RNA-DNA hybrids. This chain is Ribonuclease HII, found in Methanococcus maripaludis (strain DSM 14266 / JCM 13030 / NBRC 101832 / S2 / LL).